Reading from the N-terminus, the 1755-residue chain is Transposon Ty1-MR2 Gag-Pol polyprotein (1755 aa).

Polar residues-rich tracts occupy residues 1-10 (MESQQLSNYP), 48-60 (TKAN…TPAS), and 127-152 (QSQF…GNTF). Disordered stretches follow at residues 1-93 (MESQ…MMTQ), 126-173 (PQSQ…RPPP), and 352-421 (GSRN…SKST). A compositionally biased stretch (low complexity) spans 153-165 (TDSSSADSDMTST). Residues 299–401 (NNGIHINNKV…NSKSKTARAH (103 aa)) form an RNA-binding region. The segment covering 402-418 (NVSTSNNSPSTDNDSIS) has biased composition (low complexity). The residue at position 416 (S416) is a Phosphoserine. Residue D461 is the For protease activity; shared with dimeric partner of the active site. Residues 583–640 (NVHTSESTRKYPYPFIHRMLAHANAQTIRYSLKNNTITYFNESDVDWSSAIDYQCPDC) are integrase-type zinc finger-like. Residues 660 to 835 (NSYEPFQYLH…AGLDISTLLP (176 aa)) form the Integrase catalytic domain. D671 and D736 together coordinate Mg(2+). Disordered stretches follow at residues 956-1087 (SKAV…ETEK), 1092-1111 (RSPS…NIVP), and 1130-1186 (DLPL…EDNE). A compositionally biased stretch (low complexity) spans 960–969 (SPTDSTPPST). Over residues 1005–1015 (STPQISNIEST) the composition is skewed to polar residues. A compositionally biased stretch (basic and acidic residues) spans 1038–1053 (ESSHASKSKDFRHSDS). Polar residues-rich tracts occupy residues 1054-1082 (YSEN…QISD) and 1101-1111 (PENNSSHNIVP). A Bipartite nuclear localization signal motif is present at residues 1178–1212 (KKRSLEDNETEIKVSRDTWNTKNMRSLEPPRSKKR). The Reverse transcriptase Ty1/copia-type domain occupies 1338–1476 (NNYYITQLDI…DILGLEIKYQ (139 aa)). Mg(2+) is bound by residues D1346, D1427, D1428, D1610, E1652, and D1685. In terms of domain architecture, RNase H Ty1/copia-type spans 1610 to 1752 (DASYGNQPYY…IKTFKLLTNK (143 aa)).

As to quaternary structure, the capsid protein forms a homotrimer, from which the VLPs are assembled. The protease is a homodimer, whose active site consists of two apposed aspartic acid residues. In terms of processing, initially, virus-like particles (VLPs) are composed of the structural unprocessed proteins Gag and Gag-Pol, and also contain the host initiator methionine tRNA (tRNA(i)-Met) which serves as a primer for minus-strand DNA synthesis, and a dimer of genomic Ty RNA. Processing of the polyproteins occurs within the particle and proceeds by an ordered pathway, called maturation. First, the protease (PR) is released by autocatalytic cleavage of the Gag-Pol polyprotein yielding capsid protein p45 and a Pol-p154 precursor protein. This cleavage is a prerequisite for subsequent processing of Pol-p154 at the remaining sites to release the mature structural and catalytic proteins. Maturation takes place prior to the RT reaction and is required to produce transposition-competent VLPs.

Its subcellular location is the cytoplasm. The protein localises to the nucleus. It carries out the reaction DNA(n) + a 2'-deoxyribonucleoside 5'-triphosphate = DNA(n+1) + diphosphate. It catalyses the reaction Endonucleolytic cleavage to 5'-phosphomonoester.. In terms of biological role, capsid protein (CA) is the structural component of the virus-like particle (VLP), forming the shell that encapsulates the retrotransposons dimeric RNA genome. The particles are assembled from trimer-clustered units and there are holes in the capsid shells that allow for the diffusion of macromolecules. CA also has nucleocapsid-like chaperone activity, promoting primer tRNA(i)-Met annealing to the multipartite primer-binding site (PBS), dimerization of Ty1 RNA and initiation of reverse transcription. Functionally, the aspartyl protease (PR) mediates the proteolytic cleavages of the Gag and Gag-Pol polyproteins after assembly of the VLP. Reverse transcriptase/ribonuclease H (RT) is a multifunctional enzyme that catalyzes the conversion of the retro-elements RNA genome into dsDNA within the VLP. The enzyme displays a DNA polymerase activity that can copy either DNA or RNA templates, and a ribonuclease H (RNase H) activity that cleaves the RNA strand of RNA-DNA heteroduplexes during plus-strand synthesis and hydrolyzes RNA primers. The conversion leads to a linear dsDNA copy of the retrotransposon that includes long terminal repeats (LTRs) at both ends. Its function is as follows. Integrase (IN) targets the VLP to the nucleus, where a subparticle preintegration complex (PIC) containing at least integrase and the newly synthesized dsDNA copy of the retrotransposon must transit the nuclear membrane. Once in the nucleus, integrase performs the integration of the dsDNA into the host genome. The protein is Transposon Ty1-MR2 Gag-Pol polyprotein (TY1B-MR2) of Saccharomyces cerevisiae (strain ATCC 204508 / S288c) (Baker's yeast).